The sequence spans 231 residues: Large ribosomal subunit protein uL1 (231 aa).

The protein belongs to the universal ribosomal protein uL1 family. As to quaternary structure, part of the 50S ribosomal subunit.

Binds directly to 23S rRNA. The L1 stalk is quite mobile in the ribosome, and is involved in E site tRNA release. Functionally, protein L1 is also a translational repressor protein, it controls the translation of the L11 operon by binding to its mRNA. The chain is Large ribosomal subunit protein uL1 from Verminephrobacter eiseniae (strain EF01-2).